The sequence spans 518 residues: Sensor protein kinase HptS (518 aa).

Helical transmembrane passes span 20–40 (IFPV…IYIW) and 222–242 (GITL…FGFI). The Histidine kinase domain occupies 297 to 513 (EQLIHSIEHT…LICYKIPLSR (217 aa)). His325 carries the post-translational modification Phosphohistidine; by autocatalysis.

Autophosphorylated.

The protein localises to the cell membrane. It carries out the reaction ATP + protein L-histidine = ADP + protein N-phospho-L-histidine.. Functionally, member of the two-component regulatory system HptS/HptR that regulates genes involved in hexose phosphate transport system in response to changes in extracellular phosphate sources. May act as a sensor protein kinase which is autophosphorylated at a histidine residue and transfers its phosphate group to the conserved aspartic acid residue in the regulatory domain of HptS. In turn, HptS antagonizes CcpA-dependent transcription of a subset of CcpA-regulated genes involved in antibiotic susceptibility. This Staphylococcus aureus (strain bovine RF122 / ET3-1) protein is Sensor protein kinase HptS (hptS).